The primary structure comprises 338 residues: Glycerol-3-phosphate dehydrogenase [NAD(P)+] (338 aa).

Positions 15, 16, 36, and 110 each coordinate NADPH. K110, G139, and T141 together coordinate sn-glycerol 3-phosphate. Position 143 (A143) interacts with NADPH. Sn-glycerol 3-phosphate contacts are provided by K195, D248, S258, R259, and N260. K195 functions as the Proton acceptor in the catalytic mechanism. R259 contributes to the NADPH binding site. Residues V283 and E285 each coordinate NADPH.

It belongs to the NAD-dependent glycerol-3-phosphate dehydrogenase family.

The protein localises to the cytoplasm. The catalysed reaction is sn-glycerol 3-phosphate + NAD(+) = dihydroxyacetone phosphate + NADH + H(+). It carries out the reaction sn-glycerol 3-phosphate + NADP(+) = dihydroxyacetone phosphate + NADPH + H(+). Its pathway is membrane lipid metabolism; glycerophospholipid metabolism. In terms of biological role, catalyzes the reduction of the glycolytic intermediate dihydroxyacetone phosphate (DHAP) to sn-glycerol 3-phosphate (G3P), the key precursor for phospholipid synthesis. This chain is Glycerol-3-phosphate dehydrogenase [NAD(P)+], found in Edwardsiella ictaluri (strain 93-146).